The chain runs to 1142 residues: Potassium channel subfamily T member 2 (1142 aa).

The Cytoplasmic portion of the chain corresponds to 1–63 (MVDLESEVPP…KNQRSSLRIR (63 aa)). The helical transmembrane segment at 64–84 (LFNFSLKLLSCLLYIIRVLLE) threads the bilayer. The Extracellular segment spans residues 85–101 (KPSQGNDWSHIFWVNRS). Asn99 carries an N-linked (GlcNAc...) asparagine glycan. Residues 102–122 (LPLWGLQVSVALISLFETILL) traverse the membrane as a helical segment. Residues 123–137 (GYLSYKGNIWEQILR) are Cytoplasmic-facing. A helical transmembrane segment spans residues 138-158 (VPFILEIINAVPFIISIFWPT). The Extracellular segment spans residues 159 to 160 (LR). Residues 161-173 (NLFVPVFLNCWLA) traverse the membrane as a helical segment. At 174-198 (KHALENMINDLHRAIQRTQSAMFNQ) the chain is on the cytoplasmic side. The helical transmembrane segment at 199–219 (VLILISTLLCLIFTCICGIQH) threads the bilayer. Topologically, residues 220–228 (LERIGKKLN) are extracellular. The segment at residues 229 to 249 (LFDSLYFCIVTFSTVGFGDVT) is an intramembrane region (pore-forming). Residues 250–256 (PETWSSK) lie on the Extracellular side of the membrane. The helical transmembrane segment at 257 to 277 (LFVVAMICVALVVLPIQFEQL) threads the bilayer. At 278–1142 (AYLWMERQKS…VQDSREETQL (865 aa)) the chain is on the cytoplasmic side. 2 consecutive RCK N-terminal domains span residues 299–435 (EKHV…DHVV) and 725–865 (NKLI…CYSL). Disordered stretches follow at residues 989 to 1044 (DTKD…EKIT) and 1118 to 1142 (PNSE…ETQL). Positions 1017-1037 (LRRKSMQWARRLSRKGPKHSG) are enriched in basic residues. The segment covering 1118–1129 (PNSEPSRKNSIC) has biased composition (polar residues).

It belongs to the potassium channel family. Calcium-activated (TC 1.A.1.3) subfamily. KCa4.2/KCNT2 sub-subfamily. As to quaternary structure, homotetramer. Forms heteromer with KCNT1; heteromeric channels differ from those of homomeric channels in their unitary conductance, kinetic behavior, subcellular localization, and response to activation of protein kinase C. Post-translationally, phosphorylated by protein kinase C. Phosphorylation of the C-terminal domain inhibits channel activity. Detected in brain, and at low levels in heart. Detected in brainstem, including auditory neurons such as the medial nucleus of the trapezoid body. Detected in the olfactory bulb, red nucleus, facial nucleus, pontine nucleus, oculomotor nucleus, substantia nigra, deep cerebellar nuclei, vestibular nucleus, and the thalamus. Detected in hippocampal CA1, CA2, and CA3 regions, the dentate gyrus, supraoptic nucleus, hypothalamus, dorsal root ganglion, and cortical layers II, III, and V. Detected in striatum cholinergic interneurons.

Its subcellular location is the cell membrane. It carries out the reaction K(+)(in) = K(+)(out). With respect to regulation, are normally in a closed state unless activated by an increase in intracellular Na(+) and Cl(-). Inhibited upon stimulation of G-protein coupled receptors, such as CHRM1 and GRM1. There is conflicting data about the effect of ATP on KNCT2 channels activity. Intracellular ATP was initially report to inhibit the channel activity. However, others studies conclude that KNCT2 channels are not inhibited by intracellular ATP. In terms of biological role, sodium-activated and chloride-activated potassium channel. Produces rapidly activating outward rectifier K(+) currents. Contributes to regulate neuronal excitability. The protein is Potassium channel subfamily T member 2 (Kcnt2) of Rattus norvegicus (Rat).